Reading from the N-terminus, the 348-residue chain is Selenide, water dikinase (348 aa).

Cys17 is a catalytic residue. ATP-binding positions include Lys20 and 47 to 49; that span reads THD. Asp50 serves as a coordination point for Mg(2+). ATP-binding positions include Asp67, Asp90, and 138–140; that span reads GHT. Mg(2+) is bound at residue Asp90. Residue Asp226 participates in Mg(2+) binding.

This sequence belongs to the selenophosphate synthase 1 family. Class I subfamily. In terms of assembly, homodimer. Requires Mg(2+) as cofactor.

The enzyme catalyses hydrogenselenide + ATP + H2O = selenophosphate + AMP + phosphate + 2 H(+). Its function is as follows. Synthesizes selenophosphate from selenide and ATP. This chain is Selenide, water dikinase, found in Porphyromonas gingivalis (strain ATCC BAA-308 / W83).